The following is an 860-amino-acid chain: Leucine--tRNA ligase (860 aa).

The 'HIGH' region signature appears at 42–52 (PYPSGRLHMGH). A 'KMSKS' region motif is present at residues 619–623 (KMSKS). An ATP-binding site is contributed by lysine 622.

It belongs to the class-I aminoacyl-tRNA synthetase family.

It localises to the cytoplasm. The catalysed reaction is tRNA(Leu) + L-leucine + ATP = L-leucyl-tRNA(Leu) + AMP + diphosphate. The chain is Leucine--tRNA ligase from Escherichia coli (strain 55989 / EAEC).